Consider the following 483-residue polypeptide: Regulatory protein ViaA (483 aa).

It belongs to the ViaA family. In terms of assembly, homodimer. Interacts with RavA.

It is found in the cytoplasm. Component of the RavA-ViaA chaperone complex, which may act on the membrane to optimize the function of some of the respiratory chains. ViaA stimulates the ATPase activity of RavA. The sequence is that of Regulatory protein ViaA from Escherichia coli O6:K15:H31 (strain 536 / UPEC).